The primary structure comprises 134 residues: MAIDAFLGKWCLISSEGFDEYMKELGVGMAMRKMGSMAKPDVYIIKDGDTITVKTESTFKTSQFSFKLGEKFEENTLDGRKTQTLVSLKDDGSLIQEQEWDGKKTIITRKLVDGQLVVECDMNGIKCVRVYQKA.

The Nuclear localization signal signature appears at 23-33; sequence KELGVGMAMRK. Hexadecanoate is bound by residues Arg109 and 129–131; that span reads RVY. The N-eicosanoyl ethanolamine site is built by Arg109 and Tyr131. Residue 129–131 coordinates (9Z,12Z)-octadecadienoate; sequence RVY.

The protein belongs to the calycin superfamily. Fatty-acid binding protein (FABP) family. As to quaternary structure, monomer.

Its subcellular location is the cytoplasm. The protein localises to the nucleus. It localises to the synapse. The protein resides in the postsynaptic density. It is found in the secreted. The enzyme catalyses hexadecanoate(out) = hexadecanoate(in). The catalysed reaction is (9Z,12Z)-octadecadienoate(out) = (9Z,12Z)-octadecadienoate(in). It catalyses the reaction (9Z)-octadecenoate(out) = (9Z)-octadecenoate(in). Its function is as follows. Intracellular carrier for long-chain fatty acids and related active lipids, such as endocannabinoids, that regulate the metabolism and actions of the ligands they bind. In addition to the cytosolic transport, selectively delivers specific fatty acids from the cytosol to the nucleus, wherein they activate nuclear receptors. Delivers retinoic acid to the nuclear receptor peroxisome proliferator-activated receptor delta; which promotes proliferation and survival. May also serve as a synaptic carrier of endocannabinoid at central synapses and thus controls retrograde endocannabinoid signaling. Modulates inflammation by regulating PTGES induction via NF-kappa-B activation, and prostaglandin E2 (PGE2) biosynthesis during inflammation. Has the highest binding affinity for docosahexaenoic acid (DHA) and decreasing relative affinity for eicosapentaenoic acid (EPA), alpha-linolenic acid (ALA), oleic acid, palmitic acid, linoleic acid and stearic acid, respectively. The sequence is that of Fatty acid-binding protein 5 from Pygoscelis papua (Gentoo penguin).